Consider the following 284-residue polypeptide: MEMO1 family protein STK_20620 (284 aa).

This sequence belongs to the MEMO1 family.

The chain is MEMO1 family protein STK_20620 from Sulfurisphaera tokodaii (strain DSM 16993 / JCM 10545 / NBRC 100140 / 7) (Sulfolobus tokodaii).